A 587-amino-acid chain; its full sequence is Pescadillo homolog (587 aa).

Residues 267 to 306 are a coiled coil; that stretch reads LKKKEEKNDEEGKNLSKKELNKAIKADQEQQENDEQDNNN. Positions 290–311 are disordered; it reads IKADQEQQENDEQDNNNGESVE. The span at 295–311 shows a compositional bias: acidic residues; the sequence is EQQENDEQDNNNGESVE. Residues 335-434 form the BRCT domain; sequence STAELFSKFI…ELINVNEYAA (100 aa). Residues 437-587 form a disordered region; the sequence is TLPPHLSPWG…KKKEQLKKLN (151 aa). Residues 459-494 show a composition bias toward acidic residues; sequence KEDGEAEEDTDEEEEEVEIEDGDEDQEDEEEEEDED. Residues 470–587 adopt a coiled-coil conformation; the sequence is EEEEEVEIED…KKKEQLKKLN (118 aa). Basic and acidic residues-rich tracts occupy residues 529–541, 559–569, and 578–587; these read SNKE…ELKK, IEKKENREKQL, and KKKEQLKKLN.

It belongs to the pescadillo family. Component of the NOP7 complex, composed of ERB1, NOP7 and YTM1. The complex is held together by ERB1, which interacts with NOP7 via its N-terminal domain and with YTM1 via a high-affinity interaction between the seven-bladed beta-propeller domains of the 2 proteins. The NOP7 complex associates with the 66S pre-ribosome.

The protein resides in the nucleus. Its subcellular location is the nucleolus. The protein localises to the nucleoplasm. Its function is as follows. Component of the NOP7 complex, which is required for maturation of the 25S and 5.8S ribosomal RNAs and formation of the 60S ribosome. Required for the transition from hyphal to yeast growth. This chain is Pescadillo homolog, found in Candida albicans (strain SC5314 / ATCC MYA-2876) (Yeast).